A 338-amino-acid chain; its full sequence is uncharacterized protein (338 aa).

Residues 1 to 29 (MIKQLCKNITICTLALSTTFTVLPATSFA) form the signal peptide.

The protein belongs to the aerolysin family.

This is an uncharacterized protein from Staphylococcus aureus (strain USA300).